A 75-amino-acid chain; its full sequence is Small ribosomal subunit protein bS18 (75 aa).

The protein belongs to the bacterial ribosomal protein bS18 family. As to quaternary structure, part of the 30S ribosomal subunit. Forms a tight heterodimer with protein bS6.

In terms of biological role, binds as a heterodimer with protein bS6 to the central domain of the 16S rRNA, where it helps stabilize the platform of the 30S subunit. In Acinetobacter baylyi (strain ATCC 33305 / BD413 / ADP1), this protein is Small ribosomal subunit protein bS18.